Here is a 154-residue protein sequence, read N- to C-terminus: 3-hydroxyacyl-[acyl-carrier-protein] dehydratase FabZ (154 aa).

Histidine 60 is a catalytic residue.

It belongs to the thioester dehydratase family. FabZ subfamily.

The protein localises to the cytoplasm. The enzyme catalyses a (3R)-hydroxyacyl-[ACP] = a (2E)-enoyl-[ACP] + H2O. Its function is as follows. Involved in unsaturated fatty acids biosynthesis. Catalyzes the dehydration of short chain beta-hydroxyacyl-ACPs and long chain saturated and unsaturated beta-hydroxyacyl-ACPs. In Haemophilus ducreyi (strain 35000HP / ATCC 700724), this protein is 3-hydroxyacyl-[acyl-carrier-protein] dehydratase FabZ.